The primary structure comprises 486 residues: Monocarboxylate transporter 12 (486 aa).

The Cytoplasmic segment spans residues Met1 to Ser9. 6 helical membrane passes run Ala10–Ile30, Ala58–Val78, Ala86–Thr106, Leu115–Gly135, Ile148–Ile168, and Leu177–Ile197. The segment covering Glu201–Lys220 has biased composition (basic and acidic residues). A disordered region spans residues Glu201–Gln221. The next 6 membrane-spanning stretches (helical) occupy residues Phe253–Tyr273, Ala289–Leu309, Tyr320–Leu340, Phe353–Gly373, Val383–Val403, and Thr410–Ala430. Topologically, residues Lys431 to Thr486 are cytoplasmic.

The protein belongs to the major facilitator superfamily. Monocarboxylate porter (TC 2.A.1.13) family. In terms of assembly, interacts with isoform 2 of BSG; this interaction is required for its localization to the plasma membrane. In terms of tissue distribution, detected in kidney, choroid plexus, testis, lung, stomach, large and small intestine, spleen, fat and parotid gland. In eye, expressed in cornea, ciliary epithelium, lens epithelium and lens fiber.

Its subcellular location is the cell membrane. It localises to the basolateral cell membrane. The enzyme catalyses creatine(in) = creatine(out). It catalyses the reaction guanidinoacetate(in) = guanidinoacetate(out). Its activity is regulated as follows. Creatine uptake is inhibited by carbonyl cyanide 3-chlorophenylhydrazone (CCCP) and by valinomycin. Functions as a transporter for creatine and as well for its precursor guanidinoacetate. Transport of creatine and GAA is independent of resting membrane potential and extracellular Na(+), Cl(-), or pH. Contributes to the process of creatine biosynthesis and distribution. The polypeptide is Monocarboxylate transporter 12 (Rattus norvegicus (Rat)).